The primary structure comprises 600 residues: Translation initiation factor IF-2 (600 aa).

Residues 112-279 (ERAPIITVMG…AINLQAEILE (168 aa)) form the tr-type G domain. A G1 region spans residues 121–128 (GHVDHGKT). 121–128 (GHVDHGKT) is a GTP binding site. Residues 146–150 (GITQH) are G2. The segment at 167–170 (DTPG) is G3. GTP-binding positions include 167 to 171 (DTPGH) and 221 to 224 (NKMD). Residues 221-224 (NKMD) are G4. The interval 257–259 (SAL) is G5.

The protein belongs to the TRAFAC class translation factor GTPase superfamily. Classic translation factor GTPase family. IF-2 subfamily.

It is found in the cytoplasm. One of the essential components for the initiation of protein synthesis. Protects formylmethionyl-tRNA from spontaneous hydrolysis and promotes its binding to the 30S ribosomal subunits. Also involved in the hydrolysis of GTP during the formation of the 70S ribosomal complex. The sequence is that of Translation initiation factor IF-2 from Mycoplasma mobile (strain ATCC 43663 / 163K / NCTC 11711) (Mesomycoplasma mobile).